Here is a 118-residue protein sequence, read N- to C-terminus: Co-chaperonin GroES (118 aa).

It belongs to the GroES chaperonin family. Heptamer of 7 subunits arranged in a ring. Interacts with the chaperonin GroEL.

The protein localises to the cytoplasm. Its function is as follows. Together with the chaperonin GroEL, plays an essential role in assisting protein folding. The GroEL-GroES system forms a nano-cage that allows encapsulation of the non-native substrate proteins and provides a physical environment optimized to promote and accelerate protein folding. GroES binds to the apical surface of the GroEL ring, thereby capping the opening of the GroEL channel. This chain is Co-chaperonin GroES, found in Helicobacter pylori (strain Shi470).